The chain runs to 862 residues: Cadherin-related family member 5 (862 aa).

The first 28 residues, 1 to 28 (MGAPALLWPPLLLPLLTVLFGHLPGTLA), serve as a signal peptide directing secretion. Topologically, residues 29 to 671 (QAQVCSANQT…GQRFSTVDMA (643 aa)) are extracellular. N-linked (GlcNAc...) asparagine glycosylation is found at N36, N45, N135, N173, N201, N311, N408, N438, and N479. Cadherin domains are found at residues 40-127 (FTMN…APEF), 128-240 (PFTI…TPWF), 252-357 (IQAQ…PLQF), and 358-462 (SQSL…PPST). The disordered stretch occupies residues 452–658 (IQVSEREPPS…TTGPISGVGE (207 aa)). The segment covering 461-500 (STESPTPPEAGGTTGPSSNTTLETPSTSGTSQGPATTSSG) has biased composition (low complexity). A compositionally biased stretch (polar residues) spans 529–652 (LGISTSPQTA…GTSQPTTTGP (124 aa)). Repeat copies occupy residues 545 to 575 (TQTP…SGSS), 576 to 606 (TQTP…SGSS), and 607 to 636 (TQTP…PSGS). The interval 545 to 648 (TQTPKPGTSQ…TPKPGTSQPT (104 aa)) is 4 X 31 AA approximate tandem repeats. Residues 637 to 648 (TQTPKPGTSQPT) form a 4; truncated repeat. The chain crosses the membrane as a helical span at residues 672 to 692 (VLGGVLGALLLLALIFLIILI). The Cytoplasmic portion of the chain corresponds to 693–862 (HKHYRHRFTC…LGAVADNTYV (170 aa)). The mediates interaction with USH1C and MYO7B and is required for proper localization to microvilli tips and function in microvilli organization stretch occupies residues 693-862 (HKHYRHRFTC…LGAVADNTYV (170 aa)). Disordered regions lie at residues 706–803 (KAKE…EGGY) and 821–862 (LNEP…NTYV). Phosphoserine is present on residues S729, S751, and S755. Residues 739–768 (GPEPVQPPLRPPSPMSSSPTPPSSMPPSPQ) are compositionally biased toward pro residues. The residue at position 758 (T758) is a Phosphothreonine. 2 positions are modified to phosphoserine: S766 and S783. Positions 791–801 (LTKERRPEGEG) are enriched in basic and acidic residues. A Phosphothreonine modification is found at T825. Residues 827-837 (DVDSASASGSE) show a composition bias toward low complexity. Residues S832, S834, and S836 each carry the phosphoserine modification.

As to quaternary structure, part of the IMAC/intermicrovillar adhesion complex/intermicrovillar tip-link complex composed of ANKS4B, MYO7B, USH1C, CDHR2 and CDHR5. Interacts (via cytoplasmic domain) with USH1C and MYO7B; required for proper localization of CDHR5 to microvilli tips and its function in brush border differentiation. In terms of processing, N- and O-glycosylated. In terms of tissue distribution, expressed predominantly in kidney. Also detected in lung and small intestine.

The protein localises to the apical cell membrane. Its subcellular location is the cell projection. It localises to the microvillus membrane. Intermicrovillar adhesion molecule that forms, via its extracellular domain, calcium-dependent heterophilic complexes with CDHR2 on adjacent microvilli. Thereby, controls the packing of microvilli at the apical membrane of epithelial cells. Through its cytoplasmic domain, interacts with microvillus cytoplasmic proteins to form the intermicrovillar adhesion complex/IMAC. This complex plays a central role in microvilli and epithelial brush border differentiation. The protein is Cadherin-related family member 5 of Rattus norvegicus (Rat).